Reading from the N-terminus, the 427-residue chain is UBX domain-containing protein 10 (427 aa).

Positions 247–311 (LERFRSEREA…VQKKKKQYRA (65 aa)) form a coiled coil. Residues 323-425 (SEDEPARLSI…FPNGTVVVEL (103 aa)) enclose the UBX domain.

The protein localises to the endoplasmic reticulum. In terms of biological role, involved in protein degradation through the ubiquitin/proteasome pathway. In Schizosaccharomyces pombe (strain 972 / ATCC 24843) (Fission yeast), this protein is UBX domain-containing protein 10 (ucp10).